Consider the following 330-residue polypeptide: Polygalacturonase inhibitor 1 (330 aa).

The first 21 residues, Met-1 to Ser-21, serve as a signal peptide directing secretion. Intrachain disulfides connect Cys-25–Cys-55 and Cys-56–Cys-63. 10 LRR repeats span residues Asn-69–Leu-93, Pro-94–Lys-117, Leu-118–Leu-142, Lys-143–Leu-166, Pro-167–Ser-189, Pro-191–Ile-215, Phe-217–Ser-237, Asn-238–Ile-260, Pro-261–Ala-285, and Leu-287–Thr-309. Asn-106 and Asn-130 each carry an N-linked (GlcNAc...) asparagine glycan. Residue Asn-238 is glycosylated (N-linked (GlcNAc...) asparagine). N-linked (GlcNAc...) asparagine glycosylation occurs at Asn-291. 2 cysteine pairs are disulfide-bonded: Cys-298–Cys-320 and Cys-322–Cys-329.

The protein belongs to the polygalacturonase-inhibiting protein family.

The protein localises to the secreted. It localises to the cell wall. Its subcellular location is the membrane. Its function is as follows. Inhibitor of fungal polygalacturonase. It is an important factor for plant resistance to phytopathogenic fungi. The polypeptide is Polygalacturonase inhibitor 1 (PGIP1) (Arabidopsis thaliana (Mouse-ear cress)).